The primary structure comprises 170 residues: Myosin regulatory light chain 2 (170 aa).

The span at 1–13 (MSKAAKKKSSKKR) shows a compositional bias: basic residues. Residues 1–22 (MSKAAKKKSSKKRSGSEAAQFD) are disordered. EF-hand domains are found at residues 24–59 (KTIQ…MGQI) and 93–128 (DPEA…KRGE). Residues D37, N39, D41, and D48 each coordinate Ca(2+).

As to quaternary structure, myosin is a hexamer of 2 heavy chains and 4 light chains (two regulatory light chains and two essential light chains).

In Caenorhabditis elegans, this protein is Myosin regulatory light chain 2 (mlc-2).